Consider the following 272-residue polypeptide: NAD kinase (272 aa).

The active-site Proton acceptor is the aspartate 62. Residues 62–63 (DG), arginine 67, 129–130 (NE), arginine 140, lysine 157, aspartate 159, 170–175 (SSYSSS), alanine 194, and glutamine 229 each bind NAD(+).

This sequence belongs to the NAD kinase family. It depends on a divalent metal cation as a cofactor.

Its subcellular location is the cytoplasm. It carries out the reaction NAD(+) + ATP = ADP + NADP(+) + H(+). Involved in the regulation of the intracellular balance of NAD and NADP, and is a key enzyme in the biosynthesis of NADP. Catalyzes specifically the phosphorylation on 2'-hydroxyl of the adenosine moiety of NAD to yield NADP. The protein is NAD kinase of Thermoplasma volcanium (strain ATCC 51530 / DSM 4299 / JCM 9571 / NBRC 15438 / GSS1).